The following is a 513-amino-acid chain: Lysine--tRNA ligase (513 aa).

Positions 423 and 430 each coordinate Mg(2+).

It belongs to the class-II aminoacyl-tRNA synthetase family. As to quaternary structure, homodimer. It depends on Mg(2+) as a cofactor.

The protein localises to the cytoplasm. It catalyses the reaction tRNA(Lys) + L-lysine + ATP = L-lysyl-tRNA(Lys) + AMP + diphosphate. The chain is Lysine--tRNA ligase from Anaeromyxobacter dehalogenans (strain 2CP-1 / ATCC BAA-258).